Here is a 732-residue protein sequence, read N- to C-terminus: Photosystem I P700 chlorophyll a apoprotein A2 (732 aa).

8 helical membrane passes run 46-69 (IFAS…FHVA), 133-156 (LYTG…LHIQ), 173-197 (LNHH…HVAI), 271-289 (MAHH…GHMY), 328-351 (LHFQ…QHMY), 367-393 (SALY…IFFI), 415-437 (AVIS…LYVH), and 515-533 (FLVH…LILV). [4Fe-4S] cluster-binding residues include Cys-557 and Cys-566. The next 2 helical transmembrane spans lie at 573-594 (AFYL…YWHW) and 641-663 (LAVW…MFLI). 3 residues coordinate chlorophyll a: His-652, Met-660, and Tyr-668. Residue Trp-669 participates in phylloquinone binding. The chain crosses the membrane as a helical span at residues 705-725 (LVGLVHFTVGYILTYAAFVIA).

The protein belongs to the PsaA/PsaB family. In terms of assembly, the PsaA/B heterodimer binds the P700 chlorophyll special pair and subsequent electron acceptors. PSI consists of a core antenna complex that captures photons, and an electron transfer chain that converts photonic excitation into a charge separation. The eukaryotic PSI reaction center is composed of at least 11 subunits. It depends on P700 is a chlorophyll a/chlorophyll a' dimer, A0 is one or more chlorophyll a, A1 is one or both phylloquinones and FX is a shared 4Fe-4S iron-sulfur center. as a cofactor.

The protein resides in the plastid. Its subcellular location is the chloroplast thylakoid membrane. It carries out the reaction reduced [plastocyanin] + hnu + oxidized [2Fe-2S]-[ferredoxin] = oxidized [plastocyanin] + reduced [2Fe-2S]-[ferredoxin]. Its function is as follows. PsaA and PsaB bind P700, the primary electron donor of photosystem I (PSI), as well as the electron acceptors A0, A1 and FX. PSI is a plastocyanin/cytochrome c6-ferredoxin oxidoreductase, converting photonic excitation into a charge separation, which transfers an electron from the donor P700 chlorophyll pair to the spectroscopically characterized acceptors A0, A1, FX, FA and FB in turn. Oxidized P700 is reduced on the lumenal side of the thylakoid membrane by plastocyanin or cytochrome c6. The chain is Photosystem I P700 chlorophyll a apoprotein A2 from Cyanidioschyzon merolae (strain NIES-3377 / 10D) (Unicellular red alga).